The chain runs to 148 residues: Ribosomal RNA large subunit methyltransferase H (148 aa).

Residues Leu62, Gly94, and 113–118 (LSLLTL) each bind S-adenosyl-L-methionine.

The protein belongs to the RNA methyltransferase RlmH family. As to quaternary structure, homodimer.

Its subcellular location is the cytoplasm. The enzyme catalyses pseudouridine(1915) in 23S rRNA + S-adenosyl-L-methionine = N(3)-methylpseudouridine(1915) in 23S rRNA + S-adenosyl-L-homocysteine + H(+). In terms of biological role, specifically methylates the pseudouridine at position 1915 (m3Psi1915) in 23S rRNA. This chain is Ribosomal RNA large subunit methyltransferase H, found in Deinococcus geothermalis (strain DSM 11300 / CIP 105573 / AG-3a).